We begin with the raw amino-acid sequence, 130 residues long: Small ribosomal subunit protein uS9 (130 aa).

This sequence belongs to the universal ribosomal protein uS9 family.

The sequence is that of Small ribosomal subunit protein uS9 from Ectopseudomonas mendocina (strain ymp) (Pseudomonas mendocina).